Consider the following 47-residue polypeptide: Large ribosomal subunit protein bL34 (47 aa).

The protein belongs to the bacterial ribosomal protein bL34 family.

This Mycobacterium sp. (strain JLS) protein is Large ribosomal subunit protein bL34.